Reading from the N-terminus, the 162-residue chain is NADH-quinone oxidoreductase subunit I (162 aa).

4Fe-4S ferredoxin-type domains lie at 52–82 (LRRY…IEAG) and 93–122 (VRYD…EGPN). Positions 62, 65, 68, 72, 102, 105, 108, and 112 each coordinate [4Fe-4S] cluster.

Belongs to the complex I 23 kDa subunit family. NDH-1 is composed of 14 different subunits. Subunits NuoA, H, J, K, L, M, N constitute the membrane sector of the complex. It depends on [4Fe-4S] cluster as a cofactor.

Its subcellular location is the cell inner membrane. The catalysed reaction is a quinone + NADH + 5 H(+)(in) = a quinol + NAD(+) + 4 H(+)(out). NDH-1 shuttles electrons from NADH, via FMN and iron-sulfur (Fe-S) centers, to quinones in the respiratory chain. The immediate electron acceptor for the enzyme in this species is believed to be ubiquinone. Couples the redox reaction to proton translocation (for every two electrons transferred, four hydrogen ions are translocated across the cytoplasmic membrane), and thus conserves the redox energy in a proton gradient. This is NADH-quinone oxidoreductase subunit I from Afipia carboxidovorans (strain ATCC 49405 / DSM 1227 / KCTC 32145 / OM5) (Oligotropha carboxidovorans).